Here is a 77-residue protein sequence, read N- to C-terminus: Secapin (77 aa).

The signal sequence occupies residues 1–32 (MKNYSKNATYLITVLLFSFVAMLLIIPSKCEA). Residues 33–52 (VSNDMQPLEARSADLVPEPR) constitute a propeptide that is removed on maturation. Cysteine 61 and cysteine 72 are joined by a disulfide.

The protein belongs to the secapin family. In terms of tissue distribution, expressed by the venom gland.

The protein resides in the secreted. Functionally, nontoxic peptide. The sequence is that of Secapin from Vespa magnifica (Hornet).